Reading from the N-terminus, the 474-residue chain is MSKQLPQDFVMGGATAAYQVEGATKEDGKGRVLWDDFLDKQGRFKPDPAADFYHRYDEDLALAEKYGHQVIRVSIAWSRIFPDGAGEVEPRGVAFYHKLFADCAAHHIEPFVTLHHFDTPERLHEAGDWLSQEMLDDFVAYAKFCFEEFSEVKYWITINEPTSMAVQQYTTGTFPPAESGRFDKTFQAEHNQMVAHARIVNLYKSMQLGGQIGIVHALQTVYPYSDSAVDHHAAELQDALENRLYLDGTLAGEYHQETLALVKEILDANHQPMFQSTPQEMKAIDEAAHQLDFVGVNNYFSKWLRAYHGKSETIHNGDGTKGSSVARLQGVGEEKLPDGIETTDWDWSIYPRGMYDILMRIHNDYPLVPVTYVTENGIGLKESLPENATPDTVIEDPKRIDYVKKYLSAMADAIHDGANVKGYFIWSLQDQFSWTNGYSKRYGLFFVDFPTQNRYIKQSAEWFKSVSETHIIPD.

5 residues coordinate D-galactose 6-phosphate: Gln19, His116, Asn159, Glu160, and Asn297. The Proton donor role is filled by Glu160. Glu375 acts as the Nucleophile in catalysis. Residues Ser433, Trp434, Lys440, and Tyr442 each contribute to the D-galactose 6-phosphate site.

The protein belongs to the glycosyl hydrolase 1 family.

It carries out the reaction a 6-phospho-beta-D-galactoside + H2O = D-galactose 6-phosphate + an alcohol. It functions in the pathway carbohydrate metabolism; lactose degradation; D-galactose 6-phosphate and beta-D-glucose from lactose 6-phosphate: step 1/1. This chain is 6-phospho-beta-galactosidase, found in Lacticaseibacillus casei (Lactobacillus casei).